Here is a 667-residue protein sequence, read N- to C-terminus: tRNA 5-methylaminomethyl-2-thiouridine biosynthesis bifunctional protein MnmC (667 aa).

Residues 1-12 (MSKQQAPNTTGI) are compositionally biased toward polar residues. Residues 1–20 (MSKQQAPNTTGIGTADLQWH) form a disordered region. The tract at residues 1–240 (MSKQQAPNTT…KRECLRGVLE (240 aa)) is tRNA (mnm(5)s(2)U34)-methyltransferase. Residues 268–667 (IGAGIAGAAC…LVRSLKKPPL (400 aa)) are FAD-dependent cmnm(5)s(2)U34 oxidoreductase.

It in the N-terminal section; belongs to the methyltransferase superfamily. tRNA (mnm(5)s(2)U34)-methyltransferase family. The protein in the C-terminal section; belongs to the DAO family. FAD serves as cofactor.

It is found in the cytoplasm. The catalysed reaction is 5-aminomethyl-2-thiouridine(34) in tRNA + S-adenosyl-L-methionine = 5-methylaminomethyl-2-thiouridine(34) in tRNA + S-adenosyl-L-homocysteine + H(+). In terms of biological role, catalyzes the last two steps in the biosynthesis of 5-methylaminomethyl-2-thiouridine (mnm(5)s(2)U) at the wobble position (U34) in tRNA. Catalyzes the FAD-dependent demodification of cmnm(5)s(2)U34 to nm(5)s(2)U34, followed by the transfer of a methyl group from S-adenosyl-L-methionine to nm(5)s(2)U34, to form mnm(5)s(2)U34. This Magnetococcus marinus (strain ATCC BAA-1437 / JCM 17883 / MC-1) protein is tRNA 5-methylaminomethyl-2-thiouridine biosynthesis bifunctional protein MnmC.